A 360-amino-acid chain; its full sequence is Putative F-box protein At3g47150 (360 aa).

An F-box domain is found at 6–56; it reads NTTQIYIPLDLQINILLRLPVKSLLRFRCVSKLWCSIITSHDFRNRHFNIT.

The chain is Putative F-box protein At3g47150 from Arabidopsis thaliana (Mouse-ear cress).